Consider the following 320-residue polypeptide: TATA box-binding protein-like 2 (320 aa).

Belongs to the TBP family. In terms of tissue distribution, expression is restricted to the gonads, and is higher in the ovary than the testis.

The protein resides in the nucleus. Its function is as follows. TATA box-binding transcription factor. Members of the TBP family are differentially required to regulate transcription and development during early embryogenesis. Required for gastrulation. Regulates a large subset of genes that are ventrally expressed. Binds to a subset of promoters. In Xenopus laevis (African clawed frog), this protein is TATA box-binding protein-like 2.